Here is a 126-residue protein sequence, read N- to C-terminus: UPF0538 protein C2orf76 (126 aa).

The protein belongs to the UPF0538 family.

The sequence is that of UPF0538 protein C2orf76 (C2orf76) from Homo sapiens (Human).